The primary structure comprises 232 residues: Pseudaminic acid cytidylyltransferase (232 aa).

It belongs to the CMP-NeuNAc synthase family. It depends on Mg(2+) as a cofactor.

It catalyses the reaction pseudaminate + CTP = CMP-pseudaminate + diphosphate. Functionally, catalyzes the final step in the biosynthesis of pseudaminic acid, a sialic-acid-like sugar that is used to modify flagellin. Mediates the activation of pseudaminic acid with CMP by forming CMP-pseudaminic acid. The chain is Pseudaminic acid cytidylyltransferase (pseF) from Campylobacter jejuni subsp. jejuni serotype O:23/36 (strain 81-176).